Here is a 321-residue protein sequence, read N- to C-terminus: Endochitinase 33 (321 aa).

An N-terminal signal peptide occupies residues 1 to 19 (MPSLTALASLLALVPSALA). The region spanning 27 to 321 (QNIAVYWGQN…FETQVVNALR (295 aa)) is the GH18 domain. Residue Glu-167 is the Proton donor of the active site.

This sequence belongs to the glycosyl hydrolase 18 family. Chitinase class III subfamily. In terms of assembly, monomer.

Its subcellular location is the secreted. It carries out the reaction Random endo-hydrolysis of N-acetyl-beta-D-glucosaminide (1-&gt;4)-beta-linkages in chitin and chitodextrins.. Its function is as follows. Secreted chitinase involved in the degradation of chitin, a component of the cell walls of fungi and exoskeletal elements of some animals (including worms and arthropods). Plays a morphogenetic role during apical growth, cell division and differentiation (cell wall morphogenesis). May be involved in the degradation and further assimilation of phytopathogenic fungi, namely mycoparasitism, the major mechanism accounting for the antagonistic activity against phytopathogenic fungi displayed by Trichoderma. The chain is Endochitinase 33 (chit33) from Trichoderma harzianum (Hypocrea lixii).